We begin with the raw amino-acid sequence, 197 residues long: LexA repressor (197 aa).

The H-T-H motif DNA-binding region spans 28–47 (VREIARRFRITPRGALLHLI). Active-site for autocatalytic cleavage activity residues include serine 119 and lysine 156.

Belongs to the peptidase S24 family. In terms of assembly, homodimer.

It carries out the reaction Hydrolysis of Ala-|-Gly bond in repressor LexA.. Represses a number of genes involved in the response to DNA damage (SOS response), including recA and lexA. In the presence of single-stranded DNA, RecA interacts with LexA causing an autocatalytic cleavage which disrupts the DNA-binding part of LexA, leading to derepression of the SOS regulon and eventually DNA repair. The protein is LexA repressor of Thermotoga maritima (strain ATCC 43589 / DSM 3109 / JCM 10099 / NBRC 100826 / MSB8).